Here is a 230-residue protein sequence, read N- to C-terminus: Flagellar L-ring protein (230 aa).

An N-terminal signal peptide occupies residues 1-22 (MSPLSNFARTALACAVAALLGG). A lipid anchor (N-palmitoyl cysteine) is attached at Cys23. The S-diacylglycerol cysteine moiety is linked to residue Cys23.

It belongs to the FlgH family. In terms of assembly, the basal body constitutes a major portion of the flagellar organelle and consists of four rings (L,P,S, and M) mounted on a central rod.

It localises to the cell outer membrane. It is found in the bacterial flagellum basal body. In terms of biological role, assembles around the rod to form the L-ring and probably protects the motor/basal body from shearing forces during rotation. This is Flagellar L-ring protein from Stenotrophomonas maltophilia (strain R551-3).